The sequence spans 191 residues: Rho-related GTP-binding protein RhoG (191 aa).

GTP is bound at residue 10–17; that stretch reads GDGAVGKT. Residues 32 to 40 carry the Effector region motif; it reads YIPTVFDNY. GTP-binding positions include 57-61 and 115-118; these read DTAGQ and TKKD. Phosphothreonine occurs at positions 138 and 180. Cysteine 188 carries the cysteine methyl ester modification. Cysteine 188 is lipidated: S-geranylgeranyl cysteine. Residues 189–191 constitute a propeptide, removed in mature form; it reads ILL.

Belongs to the small GTPase superfamily. Rho family. As to quaternary structure, interacts with ARHGEF26. Interacts with ARHGEF16. Interacts with UNC13D; the interaction increases RhoG affinity to the membrane lipids, targets UNC13D to membrane lipids and facilitates cytotoxic granule (CG) docking to the plasma membrane.

It is found in the cell membrane. Functionally, plays a role in immunological synaptic F-actin density and architecture organization. Regulates actin reorganization in lymphocytes, possibly through the modulation of Rac1 activity. Required for the formation of membrane ruffles during macropinocytosis. Plays a role in cell migration and is required for the formation of cup-like structures during trans-endothelial migration of leukocytes. Binds phospholipids in an activation-dependent manner; thereby acting as an anchor for other proteins to the plasma membrane (PM). Plays a role in exocytosis of cytotoxic granules (CG) by lymphocytes/Component of the exocytosis machinery in natural killer (NK) and CD8+ T cells. Promotes the docking of cytotoxic granules (CG) to the plasma membrane through the interaction with UNC13D. Involved in the cytotoxic activity of lymphocytes/primary CD8+ T cells. This is Rho-related GTP-binding protein RhoG (RHOG) from Cricetus cricetus (Black-bellied hamster).